The chain runs to 176 residues: Nucleoside triphosphate/diphosphate phosphatase (176 aa).

Arg23 acts as the Proton donor in catalysis. Mg(2+)-binding residues include Asn87, Asp103, Asp105, Asp107, Asp120, and Glu123.

This sequence belongs to the Ntdp family. Mg(2+) serves as cofactor.

The catalysed reaction is a ribonucleoside 5'-triphosphate + H2O = a ribonucleoside 5'-diphosphate + phosphate + H(+). It catalyses the reaction a ribonucleoside 5'-diphosphate + H2O = a ribonucleoside 5'-phosphate + phosphate + H(+). Its function is as follows. Has nucleoside phosphatase activity towards nucleoside triphosphates and nucleoside diphosphates. The polypeptide is Nucleoside triphosphate/diphosphate phosphatase (Bacillus cereus (strain G9842)).